The sequence spans 4644 residues: Cytoplasmic dynein 1 heavy chain 1 (4644 aa).

The residue at position 2 (serine 2) is an N-acetylserine. The stem stretch occupies residues serine 2 to asparagine 1865. 4 coiled-coil regions span residues alanine 48–aspartate 69, serine 179–isoleucine 200, alanine 453–alanine 476, and threonine 541–alanine 564. Serine 68 carries the post-translational modification Phosphoserine. The interaction with DYNC1I2 stretch occupies residues methionine 446–alanine 701. Positions alanine 649–serine 800 are interaction with DYNC1LI2. Position 1123 is an N6-acetyllysine (lysine 1123). Residues threonine 1169–glutamine 1201 are a coiled coil. A Phosphoserine modification is found at serine 1228. 2 coiled-coil regions span residues alanine 1229–serine 1250 and arginine 1355–phenylalanine 1371. 4 AAA regions span residues tyrosine 1866–serine 2097, glutamate 2178–leucine 2450, glutamate 2554–glycine 2803, and valine 2897–threonine 3166. ATP-binding positions include glycine 1904–threonine 1911 and glycine 2222–serine 2229. Residues glycine 2388–serine 2408 are disordered. ATP-binding positions include glycine 2593–threonine 2600 and glycine 2935–threonine 2942. 3 coiled-coil regions span residues glutamate 3187–glutamine 3273, alanine 3394–methionine 3498, and glutamate 3735–glutamine 3798. Positions glutamate 3187–methionine 3498 are stalk. Position 3478 is an N6-acetyllysine (lysine 3478). AAA stretches follow at residues leucine 3551 to arginine 3780 and alanine 4003 to threonine 4219. Position 4160 is a phosphoserine (serine 4160). An N6-acetyllysine modification is found at lysine 4281. Threonine 4364 bears the Phosphothreonine mark. Position 4366 is a phosphoserine (serine 4366).

It belongs to the dynein heavy chain family. As to quaternary structure, homodimer. The cytoplasmic dynein 1 complex consists of two catalytic heavy chains (HCs) and a number of non-catalytic subunits presented by intermediate chains (ICs), light intermediate chains (LICs) and light chains (LCs); the composition seems to vary in respect to the IC, LIC and LC composition. The heavy chain homodimer serves as a scaffold for the probable homodimeric assembly of the respective non-catalytic subunits. The ICs and LICs bind directly to the HC dimer and dynein LCs assemble on the IC dimer. Interacts with DYNC1LI1; DYNC1LI1 and DYNC1LI2 bind mutually exclusive to DYNC1H1. Interacts with DYNC1LI2; DYNC1LI1 and DYNC1LI2 bind mutually exclusive to DYNC1H1. Interacts with DYNC1I2. Interacts with BICD2. Interacts with DNALI1.

The protein resides in the cytoplasm. It localises to the cytoskeleton. Cytoplasmic dynein 1 acts as a motor for the intracellular retrograde motility of vesicles and organelles along microtubules. Dynein has ATPase activity; the force-producing power stroke is thought to occur on release of ADP. Plays a role in mitotic spindle assembly and metaphase plate congression. The polypeptide is Cytoplasmic dynein 1 heavy chain 1 (Dync1h1) (Mus musculus (Mouse)).